A 214-amino-acid polypeptide reads, in one-letter code: tRNA (guanine-N(7)-)-methyltransferase (214 aa).

E43, E68, D95, and D117 together coordinate S-adenosyl-L-methionine. Residue D117 is part of the active site. Residues K121, D153, and 190-193 contribute to the substrate site; that span reads TEYE.

This sequence belongs to the class I-like SAM-binding methyltransferase superfamily. TrmB family.

The catalysed reaction is guanosine(46) in tRNA + S-adenosyl-L-methionine = N(7)-methylguanosine(46) in tRNA + S-adenosyl-L-homocysteine. The protein operates within tRNA modification; N(7)-methylguanine-tRNA biosynthesis. In terms of biological role, catalyzes the formation of N(7)-methylguanine at position 46 (m7G46) in tRNA. This chain is tRNA (guanine-N(7)-)-methyltransferase, found in Staphylococcus aureus (strain MSSA476).